The following is a 441-amino-acid chain: Probable membrane metalloprotease ARASP2, chloroplastic (441 aa).

A chloroplast-targeting transit peptide spans 1 to 84; it reads MLLNISSSPI…DFGSLESVLE (84 aa). His-96 is a Zn(2+) binding site. Glu-97 is a catalytic residue. His-100 contributes to the Zn(2+) binding site. Residues 171 to 191 form a helical membrane-spanning segment; it reads VIVVSAGIVANVIFAYAIIFT. The region spanning 196–249 is the PDZ domain; that stretch reads VGLPVQESFPGVLVPDVKSFSAASRDGLLPGDVILAVDGTELSNSGSDSVSKVV. 2 helical membrane passes run 373 to 393 and 407 to 427; these read LAVI…ALIL and VEQG…LFLI.

Belongs to the peptidase M50A family. The cofactor is Zn(2+).

Its subcellular location is the plastid. The protein localises to the chloroplast inner membrane. Its function is as follows. Metalloprotease essential for chloroplast and plant development. May be involved in regulated intramembrane proteolysis (RIP). The chain is Probable membrane metalloprotease ARASP2, chloroplastic from Arabidopsis thaliana (Mouse-ear cress).